The primary structure comprises 34 residues: Beta/mu-theraphotoxin-Pe1b (34 aa).

3 disulfides stabilise this stretch: cysteine 2/cysteine 16, cysteine 9/cysteine 21, and cysteine 15/cysteine 28.

Belongs to the neurotoxin 10 (Hwtx-1) family. 54 (ProTx-1) subfamily. In terms of tissue distribution, expressed by the venom gland.

Its subcellular location is the secreted. Its function is as follows. Ion channel impairing toxin that inhibits several voltage-gated sodium channels. It acts by inhibiting the inward component of the sodium current and by shifting the voltage dependence of channel activation to more depolarized potentials. Its most potent activity is on Nav1.7/SCN9A (IC(50)=167 nM), followed by Nav1.6/SCN8A (IC(50)=696 nM), and Nav1.2/SCN2A (IC(50)=3.54 uM). This Phormingochilus everetti (Malaysian purple earth tiger tarantula) protein is Beta/mu-theraphotoxin-Pe1b.